We begin with the raw amino-acid sequence, 500 residues long: Trans-cinnamate 4-monooxygenase (500 aa).

A helical membrane pass occupies residues 3-23 (ALLVEKVLLGLFVAAVLALVV). (E)-cinnamate is bound by residues 213–218 (RSRLSQ) and A302. Residue C442 participates in heme binding.

Belongs to the cytochrome P450 family. Heme is required as a cofactor. Expressed in roots and leaves.

It localises to the membrane. The catalysed reaction is (E)-cinnamate + reduced [NADPH--hemoprotein reductase] + O2 = (E)-4-coumarate + oxidized [NADPH--hemoprotein reductase] + H2O + H(+). Its pathway is phenylpropanoid metabolism; trans-4-coumarate biosynthesis; trans-4-coumarate from trans-cinnamate: step 1/1. Its function is as follows. Catalyzes the first oxidative step of the phenylpropanoid pathway in higher plants by transforming trans-cinnamate into p-coumarate. The compounds formed by this pathway are essential components for lignification, pollination, and defense against ultraviolet light, predators and pathogens. The chain is Trans-cinnamate 4-monooxygenase from Oryza sativa subsp. japonica (Rice).